Here is a 338-residue protein sequence, read N- to C-terminus: 4-hydroxy-2-oxovalerate aldolase (338 aa).

In terms of domain architecture, Pyruvate carboxyltransferase spans 6-256 (IHIVDTTLRD…RTGVDFYKVM (251 aa)). Position 14-15 (14-15 (RD)) interacts with substrate. Position 15 (D15) interacts with Mn(2+). H18 acts as the Proton acceptor in catalysis. The substrate site is built by S168 and H195. 2 residues coordinate Mn(2+): H195 and H197. Y286 contacts substrate.

Belongs to the 4-hydroxy-2-oxovalerate aldolase family.

It carries out the reaction (S)-4-hydroxy-2-oxopentanoate = acetaldehyde + pyruvate. The protein is 4-hydroxy-2-oxovalerate aldolase of Moorella thermoacetica (strain ATCC 39073 / JCM 9320).